The chain runs to 2843 residues: MAAASYDQLLKQVEALKMENSNLRQELEDNSNHLTKLETEASNMKEVLKQLQGSIEDEAMASSGQIDLLERLKELNLDSSNFPGVKLRSKMSLRSYGSREGSVSSRSGECSPVPMGSFPRRGFVNGSRESTGYLEELEKERSLLLADLDKEEKEKDWYYAQLQNLTKRIDSLPLTENFSLQTDMTRRQLEYEARQIRVAMEEQLGTCQDMEKRAQRRIARIQQIEKDILRIRQLLQSQATEAERSSQNKHETGSHDAERQNEGQGVGEINMATSGNGQGSTTRMDHETASVLSSSSTHSAPRRLTSHLGTKVEMVYSLLSMLGTHDKDDMSRTLLAMSSSQDSCISMRQSGCLPLLIQLLHGNDKDSVLLGNSRGSKEARARASAALHNIIHSQPDDKRGRREIRVLHLLEQIRAYCETCWEWQEAHEPGMDQDKNPMPAPVEHQICPAVCVLMKLSFDEEHRHAMNELGGLQAIAELLQVDCEMYGLTNDHYSITLRRYAGMALTNLTFGDVANKATLCSMKGCMRALVAQLKSESEDLQQVIASVLRNLSWRADVNSKKTLREVGSVKALMECALEVKKESTLKSVLSALWNLSAHCTENKADICAVDGALAFLVGTLTYRSQTNTLAIIESGGGILRNVSSLIATNEDHRQILRENNCLQTLLQHLKSHSLTIVSNACGTLWNLSARNPKDQEALWDMGAVSMLKNLIHSKHKMIAMGSAAALRNLMANRPAKYKDANIMSPGSSLPSLHVRKQKALEAELDAQHLSETFDNIDNLSPKASHRSKQRHKQSLYGDYVFDTNRHDDNRSDNFNTGNMTVLSPYLNTTVLPSSSSSRGSLDSSRSEKDRSLERERGIGLGNYHPATENPGTSSKRGLQISTTAAQIAKVMEEVSAIHTSQEDRSSGSTTELHCVTDERNALRRSSAAHTHSNTYNFTKSENSNRTCSMPYAKLEYKRSSNDSLNSVSSSDGYGKRGQMKPSIESYSEDDESKFCSYGQYPADLAHKIHSANHMDDNDGELDTPINYSLKYSDEQLNSGRQSPSQNERWARPKHIIEDEIKQSEQRQSRNQSTTYPVYTESTDDKHLKFQPHFGQQECVSPYRSRGANGSETNRVGSNHGINQNVSQSLCQEDDYEDDKPTNYSERYSEEEQHEEEERPTNYSIKYNEEKRHVDQPIDYSLKYATDIPSSQKQSFSFSKSSSGQSSKTEHMSSSSENTSTPSSNAKRQNQLHPSSAQSRSGQPQKAATCKVSSINQETIQTYCVEDTPICFSRCSSLSSLSSAEDEIGCNQTTQEADSANTLQIAEIKEKIGTRSAEDPVSEVPAVSQHPRTKSSRLQGSSLSSESARHKAVEFSSGAKSPSKSGAQTPKSPPEHYVQETPLMFSRCTSVSSLDSFESRSIASSVQSEPCSGMVSGIISPSDLPDSPGQTMPPSRSKTPPPPPQTAQTKREVPKNKAPTAEKRESGPKQAAVNAAVQRVQVLPDADTLLHFATESTPDGFSCSSSLSALSLDEPFIQKDVELRIMPPVQENDNGNETESEQPKESNENQEKEAEKTIDSEKDLLDDSDDDDIEILEECIISAMPTKSSRKAKKPAQTASKLPPPVARKPSQLPVYKLLPSQNRLQPQKHVSFTPGDDMPRVYCVEGTPINFSTATSLSDLTIESPPNELAAGEGVRGGAQSGEFEKRDTIPTEGRSTDEAQGGKTSSVTIPELDDNKAEEGDILAECINSAMPKGKSHKPFRVKKIMDQVQQASASSSAPNKNQLDGKKKKPTSPVKPIPQNTEYRTRVRKNADSKNNLNAERVFSDNKDSKKQNLKNNSKVFNDKLPNNEDRVRGSFAFDSPHHYTPIEGTPYCFSRNDSLSSLDFDDDDVDLSREKAELRKAKENKESEAKVTSHTELTSNQQSANKTQAIAKQPINRGQPKPILQKQSTFPQSSKDIPDRGAATDEKLQNFAIENTPVCFSHNSSLSSLSDIDQENNNKENEPIKETEPPDSQGEPSKPQASGYAPKSFHVEDTPVCFSRNSSLSSLSIDSEDDLLQECISSAMPKKKKPSRLKGDNEKHSPRNMGGILGEDLTLDLKDIQRPDSEHGLSPDSENFDWKAIQEGANSIVSSLHQAAAAACLSRQASSDSDSILSLKSGISLGSPFHLTPDQEEKPFTSNKGPRILKPGEKSTLETKKIESESKGIKGGKKVYKSLITGKVRSNSEISGQMKQPLQANMPSISRGRTMIHIPGVRNSSSSTSPVSKKGPPLKTPASKSPSEGQTATTSPRGAKPSVKSELSPVARQTSQIGGSSKAPSRSGSRDSTPSRPAQQPLSRPIQSPGRNSISPGRNGISPPNKLSQLPRTSSPSTASTKSSGSGKMSYTSPGRQMSQQNLTKQTGLSKNASSIPRSESASKGLNQMNNGNGANKKVELSRMSSTKSSGSESDRSERPVLVRQSTFIKEAPSPTLRRKLEESASFESLSPSSRPASPTRSQAQTPVLSPSLPDMSLSTHSSVQAGGWRKLPPNLSPTIEYNDGRPAKRHDIARSHSESPSRLPINRSGTWKREHSKHSSSLPRVSTWRRTGSSSSILSASSESSEKAKSEDEKHVNSISGTKQSKENQVSAKGTWRKIKENEFSPTNSTSQTVSSGATNGAESKTLIYQMAPAVSKTEDVWVRIEDCPINNPRSGRSPTGNTPPVIDSVSEKANPNIKDSKDNQAKQNVGNGSVPMRTVGLENRLNSFIQVDAPDQKGTEIKPGQNNPVPVSETNESSIVERTPFSSSSSSKHSSPSGTVAARVTPFNYNPSPRKSSADSTSARPSQIPTPVNNNTKKRDSKTDSTESSGTQSPKRHSGSYLVTSV.

Ala-2 carries the post-translational modification N-acetylalanine. Residues 2–61 (AAASYDQLLKQVEALKMENSNLRQELEDNSNHLTKLETEASNMKEVLKQLQGSIEDEAMA) adopt a coiled-coil conformation. Phosphoserine is present on residues Ser-107 and Ser-111. Positions 127–248 (SRESTGYLEE…ATEAERSSQN (122 aa)) form a coiled coil. Residues 239 to 305 (ATEAERSSQN…STHSAPRRLT (67 aa)) form a disordered region. A compositionally biased stretch (basic and acidic residues) spans 241–261 (EAERSSQNKHETGSHDAERQN). The span at 271–282 (MATSGNGQGSTT) shows a compositional bias: polar residues. Low complexity predominate over residues 290 to 299 (SVLSSSSTHS). ARM repeat units lie at residues 453-495 (LMKL…HYSI), 505-547 (LTNL…IASV), 548-591 (LRNL…VLSA), 592-638 (LWNL…GGGI), 639-683 (LRNV…ACGT), 684-725 (LWNL…SAAA), and 726-767 (LRNL…LDAQ). Residues Ser-744, Ser-748, and Ser-780 each carry the phosphoserine modification. The interval 828–878 (TTVLPSSSSSRGSLDSSRSEKDRSLERERGIGLGNYHPATENPGTSSKRGL) is disordered. Low complexity predominate over residues 833 to 843 (SSSSSRGSLDS). Residues 844–857 (SRSEKDRSLERERG) show a composition bias toward basic and acidic residues. Polar residues predominate over residues 869–878 (NPGTSSKRGL). Position 908 is a phosphoserine (Ser-908). 2 disordered regions span residues 923-943 (RRSS…SENS) and 958-987 (RSSN…ESYS). Over residues 927-943 (AAHTHSNTYNFTKSENS) the composition is skewed to polar residues. The interval 960–1337 (SNDSLNSVSS…QHPRTKSSRL (378 aa)) is responsible for down-regulation through a process mediated by direct ubiquitination. The segment covering 961–971 (NDSLNSVSSSD) has biased composition (low complexity). Phosphoserine is present on residues Ser-987, Ser-1038, and Ser-1042. The interaction with catenins stretch occupies residues 1020–1169 (ELDTPINYSL…TNYSIKYNEE (150 aa)). Disordered stretches follow at residues 1099–1169 (VSPY…YNEE), 1190–1244 (SQKQ…GQPQ), and 1311–1376 (IGTR…PEHY). Over residues 1107–1130 (ANGSETNRVGSNHGINQNVSQSLC) the composition is skewed to polar residues. The span at 1146–1159 (RYSEEEQHEEEERP) shows a compositional bias: basic and acidic residues. Positions 1190 to 1224 (SQKQSFSFSKSSSGQSSKTEHMSSSSENTSTPSSN) are enriched in low complexity. The span at 1225-1244 (AKRQNQLHPSSAQSRSGQPQ) shows a compositional bias: polar residues. Low complexity-rich tracts occupy residues 1335–1345 (SRLQGSSLSSE) and 1355–1366 (SSGAKSPSKSGA). Residues Ser-1360, Ser-1371, Ser-1385, Ser-1392, and Ser-1395 each carry the phosphoserine modification. Disordered stretches follow at residues 1403-1475 (SSVQ…VNAA), 1526-1569 (PPVQ…DSDD), 1583-1611 (MPTK…KPSQ), 1664-1717 (SPPN…DDNK), and 1729-1836 (NSAM…RVRG). Thr-1438 is subject to Phosphothreonine. Basic and acidic residues-rich tracts occupy residues 1448-1466 (TKRE…RESG) and 1540-1564 (EQPK…KDLL). At Ser-1567 the chain carries Phosphoserine. Over residues 1683–1698 (EFEKRDTIPTEGRSTD) the composition is skewed to basic and acidic residues. The span at 1735–1744 (GKSHKPFRVK) shows a compositional bias: basic residues. Ser-1774 bears the Phosphoserine mark. 2 stretches are compositionally biased toward basic and acidic residues: residues 1785-1794 (YRTRVRKNAD) and 1804-1813 (VFSDNKDSKK). Residues Ser-1861, Ser-1863, and Ser-1864 each carry the phosphoserine modification. Positions 1866-1893 (DFDDDDVDLSREKAELRKAKENKESEAK) are highly charged. Basic and acidic residues predominate over residues 1881-1896 (LRKAKENKESEAKVTS). 3 disordered regions span residues 1881 to 1950 (LRKA…TDEK), 1965 to 2011 (HNSS…APKS), and 2043 to 2072 (ISSA…GGIL). Polar residues-rich tracts occupy residues 1897 to 1913 (HTEL…TQAI) and 1928 to 1938 (QKQSTFPQSSK). The segment covering 1939–1950 (DIPDRGAATDEK) has biased composition (basic and acidic residues). Residues Ser-1971 and Ser-1973 each carry the phosphoserine modification. Residues 1979 to 1991 (NNNKENEPIKETE) are compositionally biased toward basic and acidic residues. Residues 2035–2059 (EDDLLQECISSAMPKKKKPSRLKGD) are interaction with AXIN1. Ser-2088, Ser-2093, Ser-2125, Ser-2129, Ser-2130, and Ser-2132 each carry phosphoserine. Disordered stretches follow at residues 2147–2635 (PFHL…SGAT) and 2667–2714 (NNPR…VPMR). Thr-2151 bears the Phosphothreonine mark. Positions 2167–2674 (ILKPGEKSTL…PINNPRSGRS (508 aa)) are basic region. The span at 2169-2187 (KPGEKSTLETKKIESESKG) shows a compositional bias: basic and acidic residues. 2 stretches are compositionally biased toward polar residues: residues 2203-2223 (VRSN…NMPS) and 2257-2271 (ASKS…TTSP). 3 positions are modified to phosphoserine: Ser-2260, Ser-2270, and Ser-2283. The span at 2286–2331 (ARQTSQIGGSSKAPSRSGSRDSTPSRPAQQPLSRPIQSPGRNSISP) shows a compositional bias: polar residues. Residues 2348 to 2369 (TSSPSTASTKSSGSGKMSYTSP) show a composition bias toward low complexity. Composition is skewed to polar residues over residues 2370–2409 (GRQM…NGNG) and 2418–2427 (RMSSTKSSGS). Positions 2459-2477 (SASFESLSPSSRPASPTRS) are enriched in low complexity. 2 positions are modified to phosphoserine: Ser-2473 and Ser-2535. The interaction with DLG1 stretch occupies residues 2475-2843 (TRSQAQTPVL…HSGSYLVTSV (369 aa)). Over residues 2518 to 2535 (NDGRPAKRHDIARSHSES) the composition is skewed to basic and acidic residues. The segment covering 2555-2568 (SSSLPRVSTWRRTG) has biased composition (polar residues). Phosphoserine is present on Ser-2569. The span at 2569–2579 (SSSSILSASSE) shows a compositional bias: low complexity. Residues 2580 to 2592 (SSEKAKSEDEKHV) show a composition bias toward basic and acidic residues. Polar residues-rich tracts occupy residues 2593–2608 (NSIS…QVSA), 2620–2635 (FSPT…SGAT), and 2668–2679 (NPRSGRSPTGNT). Phosphoserine occurs at positions 2671 and 2674. The interaction with MAPRE1 stretch occupies residues 2674 to 2843 (SPTGNTPPVI…HSGSYLVTSV (170 aa)). Thr-2679 bears the Phosphothreonine mark. 2 positions are modified to phosphoserine: Ser-2710 and Ser-2724. The tract at residues 2729 to 2843 (DAPDQKGTEI…HSGSYLVTSV (115 aa)) is disordered. Residues 2741-2757 (GQNNPVPVSETNESSIV) are compositionally biased toward polar residues. Positions 2763 to 2774 (SSSSSSKHSSPS) are enriched in low complexity. Positions 2784 to 2812 (FNYNPSPRKSSADSTSARPSQIPTPVNNN) are enriched in polar residues. Ser-2789 is subject to Phosphoserine. The Microtubule tip localization signal motif lies at 2803–2806 (SQIP). The short motif at 2841–2843 (TSV) is the PDZ-binding element.

The protein belongs to the adenomatous polyposis coli (APC) family. Forms homooligomers. Found in a complex consisting of ARHGEF4, APC and CTNNB1. Found in a complex composed of MACF1, APC, AXIN1, CTNNB1 and GSK3B. The complex composed, at least, of APC, CTNNB1 and GSK3B interacts with JPT1; the interaction requires the inactive form of GSK3B (phosphorylated at 'Ser-9'). Interacts with APC2. Interacts with DLG1 (via PDZ domains) and DLG3 (via PDZ domains). Interacts with alpha- and beta-catenins. Interacts with AXIN1 (via RGS domain). Interacts with ARHGEF4 (via N-terminus). Interacts (via C-terminal residues 2674-2843) with MAPRE1 (via C-terminal residues 206-211); the interaction inhibits association with and bundling of F-actin. Interacts with MAPRE2 and MAPRE3 (via C-terminus). Interacts with DIAPH1; DIAPH1 acts as a scaffold protein for MAPRE1 and APC to stabilize microtubules and promote cell migration. Interacts with DIAPH2. Interacts with SCRIB; may mediate APC targeting to adherens junctions of epithelial cells. Interacts with SPATA13 (via N-terminus and SH3 domain). Interacts with ASAP1 (via SH3 domain). Interacts (at the cell membrane) with AMER1 and AMER2 (via ARM repeats). Interacts with KHDRBS1. Interacts with actin; binds both to F-actin and actin filament bundles. Post-translationally, phosphorylated; phosphorylation enhances the F-actin bundling activity. Phosphorylated by GSK3B. Ubiquitinated, leading to its degradation by the proteasome. Ubiquitination is facilitated by Axin. Deubiquitinated by ZRANB1/TRABID. Expressed in a variety of tissues: brain, small intestine, colon, thymus, skeletal muscle, heart, prostate, lung, spleen, ovary, testis kidney, placenta, blood and liver. Isoform 1A: Very strongly expressed in brain but has relatively low expression levels in other tissues. Isoform 1B: Predominant form in all tissues except for brain, including gastric mucosa and blood.

Its subcellular location is the cell junction. It localises to the adherens junction. It is found in the cytoplasm. The protein resides in the cytoskeleton. The protein localises to the cell projection. Its subcellular location is the lamellipodium. It localises to the ruffle membrane. It is found in the cell membrane. In terms of biological role, tumor suppressor. Promotes rapid degradation of CTNNB1 and participates in Wnt signaling as a negative regulator. APC activity is correlated with its phosphorylation state. Activates the GEF activity of SPATA13 and ARHGEF4. Plays a role in hepatocyte growth factor (HGF)-induced cell migration. Required for MMP9 up-regulation via the JNK signaling pathway in colorectal tumor cells. Associates with both microtubules and actin filaments, components of the cytoskeleton. Plays a role in mediating the organization of F-actin into ordered bundles. Functions downstream of Rho GTPases and DIAPH1 to selectively stabilize microtubules. Acts as a mediator of ERBB2-dependent stabilization of microtubules at the cell cortex. It is required for the localization of MACF1 to the cell membrane and this localization of MACF1 is critical for its function in microtubule stabilization. This Homo sapiens (Human) protein is Adenomatous polyposis coli protein.